Consider the following 528-residue polypeptide: T-complex protein 1 subunit delta (528 aa).

The protein belongs to the TCP-1 chaperonin family. In terms of assembly, heterooligomeric complex of about 850 to 900 kDa that forms two stacked rings, 12 to 16 nm in diameter.

The protein localises to the cytoplasm. Its function is as follows. Molecular chaperone; assists the folding of proteins upon ATP hydrolysis. Known to play a role, in vitro, in the folding of actin and tubulin. In yeast may play a role in mitotic spindle formation. In Saccharomyces cerevisiae (strain ATCC 204508 / S288c) (Baker's yeast), this protein is T-complex protein 1 subunit delta (CCT4).